Reading from the N-terminus, the 209-residue chain is Dual-specificity protein phosphatase SDP1 (209 aa).

Positions 1 to 11 (MNIYTSPTRTP) are enriched in polar residues. Positions 1–43 (MNIYTSPTRTPNIAPKSGQRPSLPMLATDERSTDKESPNEDRE) are disordered. The segment covering 28-43 (TDERSTDKESPNEDRE) has biased composition (basic and acidic residues). A disulfide bridge connects residues cysteine 47 and cysteine 142. One can recognise a Tyrosine-protein phosphatase domain in the interval 59–196 (GPLLVLPEKI…LMEWEVALNA (138 aa)). Histidine 111 provides a ligand contact to 4-O-phospho-L-tyrosine. Cysteine 140 functions as the Phosphocysteine intermediate in the catalytic mechanism.

It belongs to the protein-tyrosine phosphatase family. Non-receptor class dual specificity subfamily.

The enzyme catalyses O-phospho-L-tyrosyl-[protein] + H2O = L-tyrosyl-[protein] + phosphate. In terms of biological role, mediates dephosphorylation of MAPK substrates such as SLT2, acquiring enhanced catalytic activity under oxidative conditions. This is Dual-specificity protein phosphatase SDP1 (SDP1) from Saccharomyces cerevisiae (strain ATCC 204508 / S288c) (Baker's yeast).